A 158-amino-acid polypeptide reads, in one-letter code: Transcription elongation factor GreA (158 aa).

A coiled-coil region spans residues 45–72; it reads AEYHAAREQQSFIEGRIKQLEGELSHAE.

This sequence belongs to the GreA/GreB family.

In terms of biological role, necessary for efficient RNA polymerase transcription elongation past template-encoded arresting sites. The arresting sites in DNA have the property of trapping a certain fraction of elongating RNA polymerases that pass through, resulting in locked ternary complexes. Cleavage of the nascent transcript by cleavage factors such as GreA or GreB allows the resumption of elongation from the new 3'terminus. GreA releases sequences of 2 to 3 nucleotides. This Xanthomonas campestris pv. campestris (strain ATCC 33913 / DSM 3586 / NCPPB 528 / LMG 568 / P 25) protein is Transcription elongation factor GreA.